Here is a 422-residue protein sequence, read N- to C-terminus: Serine--tRNA ligase (422 aa).

T238–E240 contacts L-serine. Position 269 to 271 (R269 to E271) interacts with ATP. L-serine is bound at residue E292. Residue E356–S359 participates in ATP binding. Position 390 (S390) interacts with L-serine.

The protein belongs to the class-II aminoacyl-tRNA synthetase family. Type-1 seryl-tRNA synthetase subfamily. As to quaternary structure, homodimer. The tRNA molecule binds across the dimer.

It localises to the cytoplasm. It catalyses the reaction tRNA(Ser) + L-serine + ATP = L-seryl-tRNA(Ser) + AMP + diphosphate + H(+). The enzyme catalyses tRNA(Sec) + L-serine + ATP = L-seryl-tRNA(Sec) + AMP + diphosphate + H(+). Its pathway is aminoacyl-tRNA biosynthesis; selenocysteinyl-tRNA(Sec) biosynthesis; L-seryl-tRNA(Sec) from L-serine and tRNA(Sec): step 1/1. Functionally, catalyzes the attachment of serine to tRNA(Ser). Is also able to aminoacylate tRNA(Sec) with serine, to form the misacylated tRNA L-seryl-tRNA(Sec), which will be further converted into selenocysteinyl-tRNA(Sec). This Helicobacter hepaticus (strain ATCC 51449 / 3B1) protein is Serine--tRNA ligase.